The following is a 351-amino-acid chain: Thiamine-phosphate synthase (351 aa).

The tract at residues 1 to 127 is unknown; sequence MQNLAPASEG…SETAKALRYR (127 aa). Residues 64–84 form a disordered region; that stretch reads RAARQTDQDPGTALSHPQERD. A thiamine-phosphate synthase region spans residues 128 to 351; that stretch reads VYILEQALTL…LRRLSQGEPS (224 aa). 4-amino-2-methyl-5-(diphosphooxymethyl)pyrimidine contacts are provided by residues 178-182 and N210; that span reads QYRDK. Positions 211 and 230 each coordinate Mg(2+). S249 is a binding site for 4-amino-2-methyl-5-(diphosphooxymethyl)pyrimidine. 275 to 277 is a 2-[(2R,5Z)-2-carboxy-4-methylthiazol-5(2H)-ylidene]ethyl phosphate binding site; it reads TPT. Position 278 (K278) interacts with 4-amino-2-methyl-5-(diphosphooxymethyl)pyrimidine. G305 contacts 2-[(2R,5Z)-2-carboxy-4-methylthiazol-5(2H)-ylidene]ethyl phosphate.

This sequence belongs to the thiamine-phosphate synthase family. Mg(2+) is required as a cofactor.

It carries out the reaction 2-[(2R,5Z)-2-carboxy-4-methylthiazol-5(2H)-ylidene]ethyl phosphate + 4-amino-2-methyl-5-(diphosphooxymethyl)pyrimidine + 2 H(+) = thiamine phosphate + CO2 + diphosphate. The catalysed reaction is 2-(2-carboxy-4-methylthiazol-5-yl)ethyl phosphate + 4-amino-2-methyl-5-(diphosphooxymethyl)pyrimidine + 2 H(+) = thiamine phosphate + CO2 + diphosphate. The enzyme catalyses 4-methyl-5-(2-phosphooxyethyl)-thiazole + 4-amino-2-methyl-5-(diphosphooxymethyl)pyrimidine + H(+) = thiamine phosphate + diphosphate. Its pathway is cofactor biosynthesis; thiamine diphosphate biosynthesis; thiamine phosphate from 4-amino-2-methyl-5-diphosphomethylpyrimidine and 4-methyl-5-(2-phosphoethyl)-thiazole: step 1/1. Its function is as follows. Condenses 4-methyl-5-(beta-hydroxyethyl)thiazole monophosphate (THZ-P) and 2-methyl-4-amino-5-hydroxymethyl pyrimidine pyrophosphate (HMP-PP) to form thiamine monophosphate (TMP). In Thermosynechococcus vestitus (strain NIES-2133 / IAM M-273 / BP-1), this protein is Thiamine-phosphate synthase.